The following is a 45-amino-acid chain: Large ribosomal subunit protein bL34 (45 aa).

Belongs to the bacterial ribosomal protein bL34 family.

This Paenarthrobacter aurescens (strain TC1) protein is Large ribosomal subunit protein bL34.